The chain runs to 510 residues: Protein disulfide-isomerase (510 aa).

The first 20 residues, 1-20, serve as a signal peptide directing secretion; it reads MLRRALLCLALTALFRAGAG. Residues 27-136 form the Thioredoxin 1 domain; that stretch reads HVLVLHKGNF…IVNWLKKRTG (110 aa). Active-site nucleophile residues include Cys-55 and Cys-58. A disulfide bond links Cys-55 and Cys-58. Lys-202 is modified (N6-acetyllysine). N6-succinyllysine occurs at positions 224 and 273. 2 positions are modified to phosphoserine: Ser-333 and Ser-359. Residues 351 to 477 form the Thioredoxin 2 domain; it reads GKIKPHLMSQ…FKKFLESGGQ (127 aa). Active-site nucleophile residues include Cys-399 and Cys-402. A disulfide bridge links Cys-399 with Cys-402. At Ser-429 the chain carries Phosphoserine. Residues 473–510 form a disordered region; that stretch reads ESGGQDGAGDDDDLEDLEEAEEPDLEEDDDQKAVKDEL. Over residues 480 to 502 the composition is skewed to acidic residues; the sequence is AGDDDDLEDLEEAEEPDLEEDDD. The short motif at 507-510 is the Prevents secretion from ER element; sequence KDEL.

This sequence belongs to the protein disulfide isomerase family. In terms of assembly, heterodimer; heterodimerizes with the protein microsomal triglyceride transfer MTTP. Homodimer. Monomers and homotetramers may also occur. Interacts with P4HA2, forming a heterotetramer consisting of 2 alpha subunits (P4HA2) and 2 beta (P4HB), where P4HB plays the role of a structural subunit; this tetramer catalyzes the formation of 4-hydroxyproline in collagen. Also constitutes the structural subunit of the microsomal triacylglycerol transfer protein MTTP in mammalian cells. Stabilizes both enzymes and retain them in the ER without contributing to the catalytic activity. Binds UBQLN1. Interacts with ERO1B. Interacts with ILDR2. Interacts with ERN1/IRE1A (via N-terminus); the interaction is enhanced by phosphorylation of P4HB by FAM20C in response to endoplasmic reticulum stress and results in attenuation of ERN1 activity. Post-translationally, phosphorylation of Ser-359 by FAM20C is induced by endoplasmic reticulum stress and results in a functional switch from oxidoreductase to molecular chaperone. It also promotes interaction with ERN1.

The protein localises to the endoplasmic reticulum. It localises to the endoplasmic reticulum lumen. It is found in the melanosome. Its subcellular location is the cell membrane. It carries out the reaction Catalyzes the rearrangement of -S-S- bonds in proteins.. This multifunctional protein catalyzes the formation, breakage and rearrangement of disulfide bonds. At the cell surface, seems to act as a reductase that cleaves disulfide bonds of proteins attached to the cell. May therefore cause structural modifications of exofacial proteins. Inside the cell, seems to form/rearrange disulfide bonds of nascent proteins. At high concentrations and following phosphorylation by FAM20C, functions as a chaperone that inhibits aggregation of misfolded proteins. At low concentrations, facilitates aggregation (anti-chaperone activity). May be involved with other chaperones in the structural modification of the TG precursor in hormone biogenesis. Also acts as a structural subunit of various enzymes such as prolyl 4-hydroxylase and microsomal triacylglycerol transfer protein MTTP. Receptor for LGALS9; the interaction retains P4HB at the cell surface of Th2 T helper cells, increasing disulfide reductase activity at the plasma membrane, altering the plasma membrane redox state and enhancing cell migration. The protein is Protein disulfide-isomerase (P4HB) of Bos taurus (Bovine).